Reading from the N-terminus, the 396-residue chain is Ornithine aminotransferase (396 aa).

Lysine 255 carries the N6-(pyridoxal phosphate)lysine modification.

Belongs to the class-III pyridoxal-phosphate-dependent aminotransferase family. OAT subfamily. Pyridoxal 5'-phosphate is required as a cofactor.

Its subcellular location is the cytoplasm. It catalyses the reaction a 2-oxocarboxylate + L-ornithine = L-glutamate 5-semialdehyde + an L-alpha-amino acid. It participates in amino-acid biosynthesis; L-proline biosynthesis; L-glutamate 5-semialdehyde from L-ornithine: step 1/1. Catalyzes the interconversion of ornithine to glutamate semialdehyde. The polypeptide is Ornithine aminotransferase (Staphylococcus epidermidis (strain ATCC 12228 / FDA PCI 1200)).